A 102-amino-acid polypeptide reads, in one-letter code: Cuticle protein 10.9 (102 aa).

The residue at position 1 (Gln-1) is a Pyrrolidone carboxylic acid. The tract at residues 1-45 (QLAEQYPPHPYSFSYDATDETGARISTSESGDESNSKTGSYSYQT) is disordered. The 67-residue stretch at 8 to 74 (PHPYSFSYDA…SIDTNEPGTK (67 aa)) folds into the Chitin-binding type R&amp;R domain. Polar residues predominate over residues 36 to 45 (SKTGSYSYQT).

Functionally, component of the cuticle of the tick. Binds chitin. The chain is Cuticle protein 10.9 from Ixodes ricinus (Common tick).